A 72-amino-acid chain; its full sequence is Large ribosomal subunit protein uL29 (72 aa).

Belongs to the universal ribosomal protein uL29 family.

The polypeptide is Large ribosomal subunit protein uL29 (Prochlorococcus marinus (strain MIT 9215)).